Reading from the N-terminus, the 144-residue chain is Large ribosomal subunit protein uL15 (144 aa).

Residues 1–48 (MIKLECLQDPSPRKRRTKLLGRGPSSGHGKTSGRGHKGDGSRSGYKRR) are disordered.

This sequence belongs to the universal ribosomal protein uL15 family. As to quaternary structure, part of the 50S ribosomal subunit.

Binds to the 23S rRNA. This is Large ribosomal subunit protein uL15 from Chlamydia trachomatis serovar L2 (strain ATCC VR-902B / DSM 19102 / 434/Bu).